The sequence spans 120 residues: Ribosome-binding factor A (120 aa).

The protein belongs to the RbfA family. In terms of assembly, monomer. Binds 30S ribosomal subunits, but not 50S ribosomal subunits or 70S ribosomes.

It is found in the cytoplasm. Its function is as follows. One of several proteins that assist in the late maturation steps of the functional core of the 30S ribosomal subunit. Associates with free 30S ribosomal subunits (but not with 30S subunits that are part of 70S ribosomes or polysomes). Required for efficient processing of 16S rRNA. May interact with the 5'-terminal helix region of 16S rRNA. The polypeptide is Ribosome-binding factor A (Clostridium botulinum (strain Loch Maree / Type A3)).